The following is a 134-amino-acid chain: Loki profilin-1 (134 aa).

The interval 55–62 (LALGKKGI) is loki loop.

Belongs to the Asgard profilin family.

It localises to the cytoplasm. Its subcellular location is the cytoskeleton. Inhibition of rabbit actin polymerization is reduced by phosphatidylinositol-(4,5)-P2(1,2-dipalmitoyl), a soluble form of the phospholipid phosphatidylinositol, suggesting an unknown lipid might regulate actin-profilin interaction in vivo. In terms of biological role, binds to actin and affects the structure of the cytoskeleton. At high concentrations inhibits spontaneous rabbit actin nucleation. This strongly suggests this archaea has a profilin-regulated actin system, and actin-type genes can be identified in this organism. The polypeptide is Loki profilin-1 (Lokiarchaeum sp. (strain GC14_75)).